Reading from the N-terminus, the 1072-residue chain is Integrin alpha-6 (1072 aa).

An N-terminal signal peptide occupies residues 1-18 (MAAALLLYLPLLPGLAGA). At 19–1010 (FNLDAENVIG…FPAKPVALYT (992 aa)) the chain is on the extracellular side. FG-GAP repeat units lie at residues 23-88 (AENV…DTRC), 94-160 (DEDT…IKDD), 170-223 (DGRL…FYDL), 238-295 (RQDK…QRAL), 296-357 (SLEH…KWEG), 358-413 (IKPI…GINT), and 414-476 (EPAQ…VQPD). Residue N71 is glycosylated (N-linked (GlcNAc...) asparagine). 3 disulfide bridges follow: C79–C88, C125–C148, and C169–C182. 2 N-linked (GlcNAc...) asparagine glycosylation sites follow: N217 and N278. Positions 318, 320, 322, and 326 each coordinate Ca(2+). Residue N364 is glycosylated (N-linked (GlcNAc...) asparagine). Residues D380, N382, D384, Y386, D388, D438, D440, N442, Y444, and D446 each contribute to the Ca(2+) site. An intrachain disulfide couples C498 to C557. N515 and N609 each carry an N-linked (GlcNAc...) asparagine glycan. Cystine bridges form between C625/C631 and C725/C736. N-linked (GlcNAc...) asparagine glycosylation is found at N730, N747, and N780. Cystine bridges form between C880–C927 and C933–C938. N-linked (GlcNAc...) asparagine glycosylation is present at N957. The helical transmembrane segment at 1011-1036 (GVPWWIIAVAIFAGVLMLALLVFLLW) threads the bilayer. Residues 1037–1072 (KCGFFKRSKKDHYDATYHKAEIHAQPSDKERLTSDA) lie on the Cytoplasmic side of the membrane. A lipid anchor (S-palmitoyl cysteine; by DHHC3) is attached at C1038. The short motif at 1039–1043 (GFFKR) is the GFFKR motif element. S1070 carries the post-translational modification Phosphoserine; by CaMK2.

It belongs to the integrin alpha chain family. In terms of assembly, heterodimer of an alpha and a beta subunit. The alpha subunit is composed of a heavy and a light chain linked by a disulfide bond. Alpha-6 associates with either beta-1 (ITGB1) or beta-4 (ITGB4) to form ITGA6:ITGB1 and ITGA6:ITGB4, respectively. Post-translationally, phosphorylated in vivo.

It localises to the cell membrane. Its function is as follows. Integrin alpha-6/beta-1 (ITGA6:ITGB1) is a receptor for laminin on platelets. Integrin alpha-6/beta-1 (ITGA6:ITGB1) is present in oocytes and is involved in sperm-egg fusion. Integrin alpha-6/beta-4 (ITGA6:ITGB4) is a receptor for laminin in epithelial cells and it plays a critical structural role in the hemidesmosome. The sequence is that of Integrin alpha-6 (ITGA6) from Gallus gallus (Chicken).